Reading from the N-terminus, the 303-residue chain is Bifunctional protein FolD (303 aa).

NADP(+)-binding positions include 175–177 (GVS) and isoleucine 243.

This sequence belongs to the tetrahydrofolate dehydrogenase/cyclohydrolase family. Homodimer.

The enzyme catalyses (6R)-5,10-methylene-5,6,7,8-tetrahydrofolate + NADP(+) = (6R)-5,10-methenyltetrahydrofolate + NADPH. It catalyses the reaction (6R)-5,10-methenyltetrahydrofolate + H2O = (6R)-10-formyltetrahydrofolate + H(+). Its pathway is one-carbon metabolism; tetrahydrofolate interconversion. Its function is as follows. Catalyzes the oxidation of 5,10-methylenetetrahydrofolate to 5,10-methenyltetrahydrofolate and then the hydrolysis of 5,10-methenyltetrahydrofolate to 10-formyltetrahydrofolate. The protein is Bifunctional protein FolD of Xanthomonas axonopodis pv. citri (strain 306).